The following is a 306-amino-acid chain: Tyrosine recombinase XerC (306 aa).

Residues 2 to 81 enclose the Core-binding (CB) domain; it reads AKASAAIEEF…ALRQFYGFLV (80 aa). One can recognise a Tyr recombinase domain in the interval 102–283; that stretch reads PLPKTLSHKE…DAARLVALVN (182 aa). Residues Arg-146, Lys-170, His-235, Arg-238, and His-261 contribute to the active site. Residue Tyr-270 is the O-(3'-phospho-DNA)-tyrosine intermediate of the active site.

The protein belongs to the 'phage' integrase family. XerC subfamily. As to quaternary structure, forms a cyclic heterotetrameric complex composed of two molecules of XerC and two molecules of XerD.

It localises to the cytoplasm. Functionally, site-specific tyrosine recombinase, which acts by catalyzing the cutting and rejoining of the recombining DNA molecules. The XerC-XerD complex is essential to convert dimers of the bacterial chromosome into monomers to permit their segregation at cell division. It also contributes to the segregational stability of plasmids. The protein is Tyrosine recombinase XerC of Erythrobacter litoralis (strain HTCC2594).